The chain runs to 796 residues: RalBP1-associated Eps domain-containing protein 1 (796 aa).

In terms of domain architecture, EH 1 spans 10-113 (EQKYYSDLFS…SKNEQESRHA (104 aa)). Positions 105-237 (KNEQESRHAA…ENWVSFADTP (133 aa)) are disordered. The span at 115–126 (SYSSDSENQGSY) shows a compositional bias: polar residues. Serine 143, serine 145, serine 162, serine 166, and serine 170 each carry phosphoserine. Residues 145–156 (SHDTVQPRTSAD) show a composition bias toward polar residues. Residue threonine 173 is modified to Phosphothreonine. Serine 272 and serine 273 each carry phosphoserine. One can recognise an EH 2 domain in the interval 285-374 (QRQYYVNQFK…ESLMPKLIDL (90 aa)). Tyrosine 288 is modified (phosphotyrosine). The residue at position 307 (serine 307) is a Phosphoserine. In terms of domain architecture, EF-hand spans 318-353 (LPILELSHIWELSDFDKDGALTLDEFCAAFHLVVAR). Aspartate 331, aspartate 333, aspartate 335, and glutamate 342 together coordinate Ca(2+). Residues 377–433 (SADVGDQPGEVGYSGSPAEAPPSKSPSMPSLNQTWPELNQSSEQWETFSERSSSSQT) are disordered. Over residues 407–433 (LNQTWPELNQSSEQWETFSERSSSSQT) the composition is skewed to polar residues. Serine 475, serine 482, serine 489, and serine 540 each carry phosphoserine. Polar residues predominate over residues 506–543 (GNTVADGYSSSDSFTSDPEQIGSNVTRQRSHSGTSPDN). Disordered regions lie at residues 506 to 624 (GNTV…IPEQ) and 638 to 725 (ASNV…QKTG). Threonine 544 carries the phosphothreonine modification. Pro residues predominate over residues 544–554 (TAPPPPPPRPQ). Phosphoserine is present on serine 562. Polar residues predominate over residues 563-574 (LDMNRTFTVTTG). Over residues 575–584 (QQQAGVVAHP) the composition is skewed to low complexity. The span at 585–596 (PAVPPRPQPSQA) shows a compositional bias: pro residues. Over residues 612–623 (THTSTSPQQIPE) the composition is skewed to polar residues. Residues 652–796 (HPEVLPAEKA…LEQLRPFSHL (145 aa)) form an interaction with RALBP1 region. Composition is skewed to basic and acidic residues over residues 671–681 (AKTDSKTEEKT) and 708–722 (KSED…EHTQ). 2 positions are modified to phosphoserine: serine 709 and serine 740. Residues 751–791 (SIRRNKETNTVLARLNSELQQQLKDVLEERISLEVQLEQLR) adopt a coiled-coil conformation.

In terms of assembly, homodimer (Potential). Interacts with RAB11FIP2. Interacts with RALBP1, CRK and GRB2. Binding to RALBP1 does not affect its Ral-binding activity. Forms a complex with the SH3 domains of CRK and GRB2 which may link it to an EGF-responsive tyrosine kinase. Interacts with AMPH, ITSN1 (via SH3 domains) and SGIP1; may be involved in clathrin-mediated endocytosis. In terms of processing, EGF stimulates phosphorylation on Tyr-residues. As to expression, widely expressed with highest levels in heart and testis.

It is found in the membrane. It localises to the clathrin-coated pit. Its function is as follows. May coordinate the cellular actions of activated EGF receptors and Ral-GTPases. This Homo sapiens (Human) protein is RalBP1-associated Eps domain-containing protein 1 (REPS1).